A 636-amino-acid polypeptide reads, in one-letter code: MSNWKNSVDPAVDYLLPIAKKAGIETAWDRYEAMQPQCGFGELGVCCRICWKGPCRIDPFGNGPQRGVCGADAHTIVARNLIRMIAAGAAAHSEHGRHIALTLLEVGEGHAPAYRIKDEQKLRKIAEKLNLAPAGKDIRQVAKEVALASLDDYSRQKRNVPCNWAKETLTAERVDKLAELGVMPHNIDAVITEIMGRTHVGCDADAVNLLLGGIKGALADYTGMCLSTELSDVIFGTPKPVITQANLGVLKEDAVNIAVHGHNPLLSEIICDVALKMNEEAKKAGAKEGINVVGICCTGNEVMMRRGIPLATNYLSQEMAIITGALDAMVVDVQCIMPALTSVAECFHTEIITTMAENKITGATHIEFREDSAVESAKKIVEVAIEAFKKRDKRKVNIPDCKQTAITGFSAEAIMAVLSKLNANDPLKPLIDNIINGNIQGIALFAGCNNPKAIHDNSFITIAKELAKNNVLMLATGCGAGAFAKNGLMTQEATEAYAGESLKAVLTALGKAAGLNGPLPLVLHMGSCVDNSRAVNVAVAIANKLGVDLDKLPLVASAPEFMSEKAVAIGTWAVTLGIPTHIGIVPQIMGSSVVVEFLTEKAKDLLGGYFIVETNPELAAAKLVAVIKERRRGLGI.

6 residues coordinate [4Fe-4S] cluster: Cys-38, Cys-46, Cys-47, Cys-50, Cys-55, and Cys-69. The [Ni-4Fe-5S] cluster site is built by His-262, Cys-297, Cys-335, Cys-448, Cys-478, and Cys-528.

Belongs to the Ni-containing carbon monoxide dehydrogenase family. Homodimer. Requires [4Fe-4S] cluster as cofactor. [Ni-4Fe-5S] cluster serves as cofactor.

The protein localises to the cytoplasm. The protein resides in the cell membrane. The catalysed reaction is CO + 2 oxidized [2Fe-2S]-[ferredoxin] + H2O = 2 reduced [2Fe-2S]-[ferredoxin] + CO2 + 2 H(+). Its activity is regulated as follows. Inactivated by O(2). CODH oxidizes carbon monoxide coupled, via CooF, to the reduction of a hydrogen cation by a hydrogenase (possibly CooH). This is Carbon monoxide dehydrogenase 1 (cooS1) from Carboxydothermus hydrogenoformans (strain ATCC BAA-161 / DSM 6008 / Z-2901).